The sequence spans 361 residues: Phosphoserine aminotransferase (361 aa).

Position 43 (Arg43) interacts with L-glutamate. Residues 77 to 78 (AS), Trp103, Thr153, Asp173, and Gln196 each bind pyridoxal 5'-phosphate. The residue at position 197 (Lys197) is an N6-(pyridoxal phosphate)lysine. Residue 238-239 (NT) participates in pyridoxal 5'-phosphate binding.

The protein belongs to the class-V pyridoxal-phosphate-dependent aminotransferase family. SerC subfamily. As to quaternary structure, homodimer. Pyridoxal 5'-phosphate is required as a cofactor.

It localises to the cytoplasm. It catalyses the reaction O-phospho-L-serine + 2-oxoglutarate = 3-phosphooxypyruvate + L-glutamate. The enzyme catalyses 4-(phosphooxy)-L-threonine + 2-oxoglutarate = (R)-3-hydroxy-2-oxo-4-phosphooxybutanoate + L-glutamate. It participates in amino-acid biosynthesis; L-serine biosynthesis; L-serine from 3-phospho-D-glycerate: step 2/3. The protein operates within cofactor biosynthesis; pyridoxine 5'-phosphate biosynthesis; pyridoxine 5'-phosphate from D-erythrose 4-phosphate: step 3/5. Its function is as follows. Catalyzes the reversible conversion of 3-phosphohydroxypyruvate to phosphoserine and of 3-hydroxy-2-oxo-4-phosphonooxybutanoate to phosphohydroxythreonine. This chain is Phosphoserine aminotransferase, found in Pseudomonas paraeruginosa (strain DSM 24068 / PA7) (Pseudomonas aeruginosa (strain PA7)).